Reading from the N-terminus, the 144-residue chain is Glutaredoxin-C6 (144 aa).

The 105-residue stretch at 39–143 (EAKIRRLISE…PKLVQVGALW (105 aa)) folds into the Glutaredoxin domain. A disulfide bridge connects residues Cys-59 and Cys-62.

Belongs to the glutaredoxin family. CC-type subfamily.

Its subcellular location is the cytoplasm. Its function is as follows. Has a glutathione-disulfide oxidoreductase activity in the presence of NADPH and glutathione reductase. Reduces low molecular weight disulfides and proteins. This is Glutaredoxin-C6 (GRXC6) from Arabidopsis thaliana (Mouse-ear cress).